The following is a 360-amino-acid chain: Methionine import ATP-binding protein MetN (360 aa).

The disordered stretch occupies residues 1 to 22; the sequence is MSHTASTPTPEEYSAQQPSTQG. Residues 25-265 enclose the ABC transporter domain; that stretch reads VEFRGITKVF…PQTQVAQKFV (241 aa). 62–69 is an ATP binding site; the sequence is GYSGAGKS.

The protein belongs to the ABC transporter superfamily. Methionine importer (TC 3.A.1.24) family. As to quaternary structure, the complex is composed of two ATP-binding proteins (MetN), two transmembrane proteins (MetI) and a solute-binding protein (MetQ).

It localises to the cell membrane. It carries out the reaction L-methionine(out) + ATP + H2O = L-methionine(in) + ADP + phosphate + H(+). It catalyses the reaction D-methionine(out) + ATP + H2O = D-methionine(in) + ADP + phosphate + H(+). Its function is as follows. Part of the ABC transporter complex MetNIQ involved in methionine import. Responsible for energy coupling to the transport system. The sequence is that of Methionine import ATP-binding protein MetN from Corynebacterium glutamicum (strain ATCC 13032 / DSM 20300 / JCM 1318 / BCRC 11384 / CCUG 27702 / LMG 3730 / NBRC 12168 / NCIMB 10025 / NRRL B-2784 / 534).